The primary structure comprises 798 residues: Cadherin-20 (798 aa).

Residues 1–35 (MWTSGRMSNAKNLFGLGVSLYFWGLMDLTTTVLSG) form the signal peptide. The propeptide occupies 36-58 (SARPLTEGPEDNLSDKLHQRMKR). N-linked (GlcNAc...) asparagine glycosylation occurs at N47. Residues 59–618 (SWVWNQFFVL…AYVLPVSLSR (560 aa)) lie on the Extracellular side of the membrane. Cadherin domains lie at 60–164 (WVWN…EPKF), 165–273 (LDGP…PPRF), 274–392 (PQKH…EPSF), 389–493 (EPSF…APEF), and 493–615 (FARF…LPVS). The Cell attachment site motif lies at 88 to 90 (RGD). An N-linked (GlcNAc...) asparagine glycan is attached at N260. N-linked (GlcNAc...) asparagine glycosylation is found at N419, N460, and N541. The chain crosses the membrane as a helical span at residues 619 to 639 (GALIAILACIFVLLVLVLLIL). At 640 to 798 (SMRRQRKQPY…GATDSSGALW (159 aa)) the chain is on the cytoplasmic side.

As to expression, detected in embryonic spinal cord, in the brachial and lumbar section of motor neurons (at protein level). Detected in ventro-lateral portion of embryonic spinal cord, in the brachial and lumbar section of embryonic motor neurons. Detected in embryonic adductor motor neurons and embryonic dorsal root ganglion. Detected in the caudal half of newly generated somites and in presomitic mesoderm.

Its subcellular location is the cell membrane. Functionally, cadherins are calcium-dependent cell adhesion proteins. They preferentially interact with themselves in a homophilic manner in connecting cells; cadherins may thus contribute to the sorting of heterogeneous cell types. The protein is Cadherin-20 (CDH20) of Gallus gallus (Chicken).